The chain runs to 378 residues: Lactosylceramide 1,3-N-acetyl-beta-D-glucosaminyltransferase (378 aa).

The Cytoplasmic segment spans residues 1–14 (MRMLVSGRRVKKWQ). Residues 15–35 (LIIQLFATCFLASLMFFWEPI) form a helical; Signal-anchor for type II membrane protein membrane-spanning segment. The Lumenal portion of the chain corresponds to 36–378 (DNHIVSHMKS…DTYPCRAAFI (343 aa)). A glycan (N-linked (GlcNAc...) asparagine) is linked at Asn-59.

This sequence belongs to the glycosyltransferase 31 family. In terms of tissue distribution, widely expressed. Highly expressed in lung, colon, placenta, testis, pituitary gland and cerebellum. Weakly expressed in brain, liver, spleen, lymph node and thymus.

The protein resides in the golgi apparatus membrane. It carries out the reaction a beta-D-Gal-(1-&gt;4)-beta-D-Glc-(1&lt;-&gt;1)-Cer(d18:1(4E)) + UDP-N-acetyl-alpha-D-glucosamine = a beta-D-GlcNAc-(1-&gt;3)-beta-D-Gal-(1-&gt;4)-beta-D-Glc-(1&lt;-&gt;1)-Cer(d18:1(4E)) + UDP + H(+). It catalyses the reaction a neolactoside nLc4Cer(d18:1(4E)) + UDP-N-acetyl-alpha-D-glucosamine = a neolactoside IV(3)-beta-GlcNAc-nLc4Cer(d18:1(4E)) + UDP + H(+). Its pathway is protein modification; protein glycosylation. In terms of biological role, beta-1,3-N-acetylglucosaminyltransferase that plays a key role in the synthesis of lacto- or neolacto-series carbohydrate chains on glycolipids, notably by participating in biosynthesis of HNK-1 and Lewis X carbohydrate structures. Has strong activity toward lactosylceramide (LacCer) and neolactotetraosylceramide (nLc(4)Cer; paragloboside), resulting in the synthesis of Lc(3)Cer and neolactopentaosylceramide (nLc(5)Cer), respectively. Probably plays a central role in regulating neolacto-series glycolipid synthesis during embryonic development. The sequence is that of Lactosylceramide 1,3-N-acetyl-beta-D-glucosaminyltransferase from Homo sapiens (Human).